Reading from the N-terminus, the 691-residue chain is Elongation factor G (691 aa).

A tr-type G domain is found at 8 to 283; it reads EDYRNFGIMA…AVVDFLPNPT (276 aa). Residues 17–24, 81–85, and 135–138 contribute to the GTP site; these read AHIDAGKT, DTPGH, and NKMD.

The protein belongs to the TRAFAC class translation factor GTPase superfamily. Classic translation factor GTPase family. EF-G/EF-2 subfamily.

The protein resides in the cytoplasm. Catalyzes the GTP-dependent ribosomal translocation step during translation elongation. During this step, the ribosome changes from the pre-translocational (PRE) to the post-translocational (POST) state as the newly formed A-site-bound peptidyl-tRNA and P-site-bound deacylated tRNA move to the P and E sites, respectively. Catalyzes the coordinated movement of the two tRNA molecules, the mRNA and conformational changes in the ribosome. This Maricaulis maris (strain MCS10) (Caulobacter maris) protein is Elongation factor G.